The following is a 288-amino-acid chain: Transmembrane protein 163 (288 aa).

Over residues 1-11 the composition is skewed to basic and acidic residues; sequence MERAPGSERRS. The interval 1 to 64 is disordered; it reads MERAPGSERR…ESGQFSDGFE (64 aa). The Cytoplasmic segment spans residues 1–87; sequence MERAPGSERR…HEAQNYRKKA (87 aa). Position 11 is a phosphoserine (S11). The span at 12 to 24 shows a compositional bias: pro residues; it reads PPGPGVPRPPPRG. Over residues 25-42 the composition is skewed to low complexity; it reads HAPSTAAPAPNPAPLSSS. The tract at residues 41-71 is required for interaction with MCOLN1; the sequence is SSMQPDEERQPRISESGQFSDGFEDRGLLES. S54, S56, and S60 each carry phosphoserine. Residues 88–108 traverse the membrane as a helical segment; it reads LWVSWLSIIVTLALAVAAFTV. At 109-115 the chain is on the extracellular side; that stretch reads SVMRYSA. A helical membrane pass occupies residues 116 to 136; the sequence is SAFGFAFDAILDVLSSAIVLW. At 137 to 149 the chain is on the cytoplasmic side; sequence RYSNAAAVHSAHR. Residues 150 to 170 traverse the membrane as a helical segment; it reads EYIACVILGVIFLLSSICIVV. The Extracellular portion of the chain corresponds to 171-186; sequence KAIHDLSTRLLPEVDD. Residues 187 to 207 form a helical membrane-spanning segment; it reads FLFSVSILSGILCSVLAVLKF. Residues 208-216 are Cytoplasmic-facing; the sequence is MLGKVLTSR. A helical transmembrane segment spans residues 217 to 237; it reads ALITDGFNSLVGGVMGFSILL. Residues 238–254 are Extracellular-facing; sequence SAEVFKHNAAVWYLDGS. A helical transmembrane segment spans residues 255–275; sequence IGVLIGLTIFAYGVKLLIDMV. Topologically, residues 276–288 are cytoplasmic; the sequence is PRVRQTRHYEMFE.

It belongs to the TMEM163 family. Homodimer. Interacts with MCOLN1. Interacts with SLC30A1, SLC30A2, SLC30A3 and SLC30A4. In terms of tissue distribution, strongly expressed in brain. Also detected in lung, liver, kidney and spleen. Mainly expressed in the glutaminergic neuron subpopulations.

It is found in the cytoplasmic vesicle. The protein localises to the secretory vesicle. The protein resides in the synaptic vesicle membrane. It localises to the early endosome membrane. Its subcellular location is the late endosome membrane. It is found in the lysosome membrane. The protein localises to the cell membrane. The catalysed reaction is Zn(2+)(in) = Zn(2+)(out). Functionally, zinc ion transporter that mediates zinc efflux and plays a crucial role in intracellular zinc homeostasis. Binds the divalent cations Zn(2+), Ni(2+), and to a minor extent Cu(2+). Is a functional modulator of P2X purinoceptors, including P2RX1, P2RX3, P2RX4 and P2RX7. Plays a role in central nervous system development and is required for myelination, and survival and proliferation of oligodendrocytes. The protein is Transmembrane protein 163 (Tmem163) of Rattus norvegicus (Rat).